Reading from the N-terminus, the 110-residue chain is Small ribosomal subunit protein bS16 (110 aa).

Positions 82–103 (VKKREARNNPEKAVPRKERKAQ) are enriched in basic and acidic residues. The disordered stretch occupies residues 82 to 110 (VKKREARNNPEKAVPRKERKAQAEAAAKG).

Belongs to the bacterial ribosomal protein bS16 family.

This chain is Small ribosomal subunit protein bS16, found in Bradyrhizobium sp. (strain ORS 278).